We begin with the raw amino-acid sequence, 253 residues long: POU Class 2 homeobox-associating factor 3 (253 aa).

One can recognise an OCA domain in the interval 5–27 (PKVYQGVRVKMTVKELLQQRRAH).

Belongs to the POU2AF family. In terms of assembly, interacts with POU2F3 in a DNA-dependent manner; this interaction increases POU2F3 transactivation activity. As to expression, expressed in tuft cells.

The protein resides in the cytoplasm. Its subcellular location is the nucleus. Functionally, transcriptional coactivator that specifically associates with POU2F3. This complex drives the development of tuft cells, a rare a rare chemosensory cells that coordinate immune and neural functions within mucosal epithelial tissues. In Mus musculus (Mouse), this protein is POU Class 2 homeobox-associating factor 3.